Reading from the N-terminus, the 181-residue chain is Urease accessory protein UreE (181 aa).

The interval 143–181 (FDPEPGAYNQAGQGHSHGHSHGHSHNHDHEHSHGHKHAH) is disordered.

It belongs to the UreE family.

The protein resides in the cytoplasm. Its function is as follows. Involved in urease metallocenter assembly. Binds nickel. Probably functions as a nickel donor during metallocenter assembly. The polypeptide is Urease accessory protein UreE (Marinobacter nauticus (strain ATCC 700491 / DSM 11845 / VT8) (Marinobacter aquaeolei)).